The primary structure comprises 1068 residues: Carbamoyl phosphate synthase large chain (1068 aa).

The carboxyphosphate synthetic domain stretch occupies residues 1–401 (MPLNKDIKKV…AFLKGIRSLE (401 aa)). ATP is bound by residues Arg129, Arg169, Gly175, Gly176, Lys208, Val210, Glu215, Gly241, Ile242, His243, Gln284, and Glu298. In terms of domain architecture, ATP-grasp 1 spans 133-327 (RNVMSRINEP…IAKVAAKIAL (195 aa)). Mg(2+)-binding residues include Gln284, Glu298, and Asn300. Positions 284, 298, and 300 each coordinate Mn(2+). The oligomerization domain stretch occupies residues 402–549 (IGKYSLEHKK…YSTYDVYDEV (148 aa)). Positions 550 to 932 (EVSKNKKVIV…ALYKGFIGAN (383 aa)) are carbamoyl phosphate synthetic domain. The ATP-grasp 2 domain maps to 674-864 (DELLEKLQIS…IVDIATRVML (191 aa)). ATP is bound by residues Arg710, Lys749, Leu751, Glu755, Gly780, Val781, His782, Ser783, Gln823, and Glu835. Residues Gln823, Glu835, and Asn837 each contribute to the Mg(2+) site. Positions 823, 835, and 837 each coordinate Mn(2+). The region spanning 933-1068 (MSIKKEKGTI…ETLHIFDLSN (136 aa)) is the MGS-like domain. An allosteric domain region spans residues 933–1068 (MSIKKEKGTI…ETLHIFDLSN (136 aa)).

It belongs to the CarB family. In terms of assembly, composed of two chains; the small (or glutamine) chain promotes the hydrolysis of glutamine to ammonia, which is used by the large (or ammonia) chain to synthesize carbamoyl phosphate. Tetramer of heterodimers (alpha,beta)4. Requires Mg(2+) as cofactor. It depends on Mn(2+) as a cofactor.

It carries out the reaction hydrogencarbonate + L-glutamine + 2 ATP + H2O = carbamoyl phosphate + L-glutamate + 2 ADP + phosphate + 2 H(+). The enzyme catalyses hydrogencarbonate + NH4(+) + 2 ATP = carbamoyl phosphate + 2 ADP + phosphate + 2 H(+). The protein operates within amino-acid biosynthesis; L-arginine biosynthesis; carbamoyl phosphate from bicarbonate: step 1/1. It participates in pyrimidine metabolism; UMP biosynthesis via de novo pathway; (S)-dihydroorotate from bicarbonate: step 1/3. Its function is as follows. Large subunit of the glutamine-dependent carbamoyl phosphate synthetase (CPSase). CPSase catalyzes the formation of carbamoyl phosphate from the ammonia moiety of glutamine, carbonate, and phosphate donated by ATP, constituting the first step of 2 biosynthetic pathways, one leading to arginine and/or urea and the other to pyrimidine nucleotides. The large subunit (synthetase) binds the substrates ammonia (free or transferred from glutamine from the small subunit), hydrogencarbonate and ATP and carries out an ATP-coupled ligase reaction, activating hydrogencarbonate by forming carboxy phosphate which reacts with ammonia to form carbamoyl phosphate. The sequence is that of Carbamoyl phosphate synthase large chain from Clostridium botulinum (strain Loch Maree / Type A3).